The sequence spans 455 residues: J protein JJJ2 (455 aa).

One can recognise a J domain in the interval 12 to 76; the sequence is TYYSILGVPT…QLRAEYDKKL (65 aa). Residues 104 to 241 form a disordered region; it reads RNSKPYEQQP…RKKSEKKATP (138 aa). A compositionally biased stretch (low complexity) spans 133-144; sequence NSNPHNENSSNN. The span at 156–168 shows a compositional bias: basic and acidic residues; it reads TLSKDSEDKHGTD.

The protein localises to the cytoplasm. It localises to the nucleus. This Candida glabrata (strain ATCC 2001 / BCRC 20586 / JCM 3761 / NBRC 0622 / NRRL Y-65 / CBS 138) (Yeast) protein is J protein JJJ2 (JJJ2).